Here is a 67-residue protein sequence, read N- to C-terminus: Sperm protamine P1 (67 aa).

Residues 1 to 67 (MASYRNSRSR…RRRKRNNENK (67 aa)) are disordered. 2 stretches are compositionally biased toward basic residues: residues 7 to 25 (SRSRSRSRFRRRRGRRSRV) and 34 to 67 (RSSRRRRRGKGRAHSGKKGRRSGSRRRKRNNENK).

The protein belongs to the protamine P1 family. As to expression, testis.

The protein resides in the nucleus. Its subcellular location is the chromosome. Functionally, protamines substitute for histones in the chromatin of sperm during the haploid phase of spermatogenesis. They compact sperm DNA into a highly condensed, stable and inactive complex. The chain is Sperm protamine P1 (PRM1) from Isoodon macrourus (Short-nosed bandicoot).